Here is a 184-residue protein sequence, read N- to C-terminus: ATP synthase subunit b, chloroplastic (184 aa).

Residues 27-49 (LATNPINLSVVLGVLIFFGKGVL) form a helical membrane-spanning segment.

It belongs to the ATPase B chain family. F-type ATPases have 2 components, F(1) - the catalytic core - and F(0) - the membrane proton channel. F(1) has five subunits: alpha(3), beta(3), gamma(1), delta(1), epsilon(1). F(0) has four main subunits: a(1), b(1), b'(1) and c(10-14). The alpha and beta chains form an alternating ring which encloses part of the gamma chain. F(1) is attached to F(0) by a central stalk formed by the gamma and epsilon chains, while a peripheral stalk is formed by the delta, b and b' chains.

Its subcellular location is the plastid. The protein localises to the chloroplast thylakoid membrane. In terms of biological role, f(1)F(0) ATP synthase produces ATP from ADP in the presence of a proton or sodium gradient. F-type ATPases consist of two structural domains, F(1) containing the extramembraneous catalytic core and F(0) containing the membrane proton channel, linked together by a central stalk and a peripheral stalk. During catalysis, ATP synthesis in the catalytic domain of F(1) is coupled via a rotary mechanism of the central stalk subunits to proton translocation. Its function is as follows. Component of the F(0) channel, it forms part of the peripheral stalk, linking F(1) to F(0). The sequence is that of ATP synthase subunit b, chloroplastic from Morus indica (Mulberry).